The sequence spans 217 residues: Thiosulfate dehydrogenase electron acceptor (217 aa).

Residues 1–28 form the signal peptide; it reads MRQFIPMRRVLAVATLGALFWAAPASWA. Cytochrome c domains follow at residues 29–104 and 116–206; these read AAPP…SKLK and AAAA…AAQP. Positions 37, 40, 41, 137, 140, and 141 each coordinate heme c.

In terms of processing, binds 2 heme c groups covalently per subunit.

Its function is as follows. Acts as an electron acceptor for the thiosulfate dehydrogenase TsdA. This Thiomonas intermedia (strain K12) (Thiobacillus intermedius) protein is Thiosulfate dehydrogenase electron acceptor (tsdB).